The chain runs to 219 residues: MAKTWIYAASAAAIGGALIGGWLLDPAPPEASPQARQSPAAQAAAAPTAALAAPAADATRMLAPTPVTTPAPRERVTLWQGELRSREGAQGIPEYLAQVEPALLDTLALGQVLEMSLPGRERPLQARLASTHNSAGLPVWRGGLVDGDEAESLTVVRGSLETHINVATLDGSYSIIVDNRSGKTRVIDENDIAARSDPHGDHVDAPLAELPPMPPPAQG.

The chain crosses the membrane as a helical span at residues 4–24 (TWIYAASAAAIGGALIGGWLL). The segment covering 191 to 204 (DIAARSDPHGDHVD) has biased composition (basic and acidic residues). The disordered stretch occupies residues 191-219 (DIAARSDPHGDHVDAPLAELPPMPPPAQG). Residues 209 to 219 (ELPPMPPPAQG) show a composition bias toward pro residues.

Its subcellular location is the cell membrane. Inhibitor of the metalloendopeptidase Mep72. Forms a protein-protein complex with the protease, which is the product of its coregulated adjacent gene, and probably prevents premature protease activity until the protein has been secreted. The chain is Biofilm-associated metzincin protease inhibitor from Pseudomonas aeruginosa (strain ATCC 15692 / DSM 22644 / CIP 104116 / JCM 14847 / LMG 12228 / 1C / PRS 101 / PAO1).